Consider the following 269-residue polypeptide: 4-hydroxy-tetrahydrodipicolinate reductase (269 aa).

Residues 8–13 (GAAGRM), E34, 98–100 (GTT), and 122–125 (APNY) contribute to the NAD(+) site. Residue H155 is the Proton donor/acceptor of the active site. Residue H156 coordinates (S)-2,3,4,5-tetrahydrodipicolinate. K159 serves as the catalytic Proton donor. 165 to 166 (GT) contacts (S)-2,3,4,5-tetrahydrodipicolinate.

It belongs to the DapB family.

It is found in the cytoplasm. It carries out the reaction (S)-2,3,4,5-tetrahydrodipicolinate + NAD(+) + H2O = (2S,4S)-4-hydroxy-2,3,4,5-tetrahydrodipicolinate + NADH + H(+). It catalyses the reaction (S)-2,3,4,5-tetrahydrodipicolinate + NADP(+) + H2O = (2S,4S)-4-hydroxy-2,3,4,5-tetrahydrodipicolinate + NADPH + H(+). It functions in the pathway amino-acid biosynthesis; L-lysine biosynthesis via DAP pathway; (S)-tetrahydrodipicolinate from L-aspartate: step 4/4. Functionally, catalyzes the conversion of 4-hydroxy-tetrahydrodipicolinate (HTPA) to tetrahydrodipicolinate. This Aliivibrio salmonicida (strain LFI1238) (Vibrio salmonicida (strain LFI1238)) protein is 4-hydroxy-tetrahydrodipicolinate reductase.